Reading from the N-terminus, the 44-residue chain is U2-agatoxin-Ao1s (44 aa).

Residues 1-9 (KKVYSFLKL) constitute a propeptide that is removed on maturation. 3 disulfide bridges follow: cysteine 12–cysteine 28, cysteine 19–cysteine 33, and cysteine 27–cysteine 43.

It belongs to the neurotoxin 01 (U2-agtx) family. Expressed by the venom gland.

The protein localises to the secreted. In terms of biological role, insect active toxin causing rapid but reversible paralysis in crickets. No activity shown in mammals. Does not show effect on mammalian voltage-gated calcium channels. The polypeptide is U2-agatoxin-Ao1s (Agelena orientalis (Funnel-web spider)).